The following is a 504-amino-acid chain: tRNA (uracil-5-)-methyltransferase homolog B (504 aa).

The N-terminal 16 residues, 1–16, are a transit peptide targeting the mitochondrion; sequence MAGLKRRVPLHSLRYF. Residues Gln-323, Glu-373, and Asn-423 each contribute to the S-adenosyl-L-methionine site. Catalysis depends on Cys-451, which acts as the Nucleophile. Residue Glu-497 is the Proton acceptor of the active site.

The protein belongs to the class I-like SAM-binding methyltransferase superfamily. RNA M5U methyltransferase family.

It localises to the mitochondrion. Its subcellular location is the mitochondrion matrix. It catalyses the reaction uridine(54) in tRNA + S-adenosyl-L-methionine = 5-methyluridine(54) in tRNA + S-adenosyl-L-homocysteine + H(+). The catalysed reaction is a uridine in 12S rRNA + S-adenosyl-L-methionine = a 5-methyluridine in 12S rRNA + S-adenosyl-L-homocysteine + H(+). Functionally, mitochondrial S-adenosyl-L-methionine-dependent methyltransferase that catalyzes the formation of 5-methyl-uridine in tRNAs and 12S rRNA. Catalyzes the methylation of uridine at position 54 (m5U54) in all tRNAs. Specifically methylates the uridine in position 429 of 12S rRNA (m5U429). Does not affect RNA stability or mitochondrial translation. In Homo sapiens (Human), this protein is tRNA (uracil-5-)-methyltransferase homolog B.